The following is a 168-amino-acid chain: Vitelline membrane protein Vm26Ab (168 aa).

The N-terminal stretch at 1–23 (MAFNFGHLLIAGLVALSAVSSET) is a signal peptide. Positions 24–42 (IQLQPTQGILIPAPLAENI) are cleaved as a propeptide — removed between stage 11 and 14 of oogenesis. The segment at 43–46 (RVSR) is essential for N-terminal propeptide removal. Potential serine protease cleavage site. The 8 X 8 AA approximate repeats of P-[AS]-Y-S-A-P-A-[AS] stretch occupies residues 52–119 (YGAAPAAPSY…PAYSAPASIP (68 aa)). One copy of the 1; half-length repeat lies at 55 to 58 (APAA). Copy 2 of the repeat occupies 59–66 (PSYSAPAA). Residues 70 to 77 (QAYSAPAA) form a 3; approximate repeat. 5 tandem repeats follow at residues 78 to 85 (PAYSAPAA), 86 to 93 (PAYSAPAA), 94 to 101 (PAYSAPAA), 102 to 109 (PAYSAPAA), and 110 to 117 (PAYSAPAS). A VM domain is found at 117-154 (SIPSPPCPKNYLFSCQPSLQPVPCSAPAQSYGSAGAYS). Positions 155 to 168 (QYVPQYAVPFVREL) are cleaved as a propeptide — removed between stage 9 and 12 of oogenesis.

This sequence belongs to the vitelline membrane protein family. As to quaternary structure, interacts with vml and Vm26Aa; forms part of a disulfide-linked network within the vitelline membrane of stage 10 egg chambers. In terms of processing, proteolytically processed after secretion into the perivitelline space. Undergoes several proteolytic processing steps during formation of the vitelline membrane; an initial processing step removing a C-terminal propeptide occurs between stage 9 and 12 of oogenesis while a second removing a N-terminal propeptide occurs between stage 11 and 14. Becomes part of a disulfide-linked network including other vitelline membrane proteins, including vml and Vm26Aa, during vitelline membrane biogenesis and maturation. Cys-123, Cys-131 and Cys-140 are involved in disulfide network formation, with Cys-131 being the most important. Undergoes both disulfide and non-disulfide cross-linking upon incorporation into the vitelline membrane. Follicle cells.

It is found in the secreted. It localises to the extracellular space. Its subcellular location is the extracellular matrix. Its function is as follows. Major early eggshell protein secreted by follicle cells into the perivitelline space and incorporated into the vitelline membrane. Involved in vitelline membrane biogenesis; forms a cross-linked network with other vitelline membrane components. This is Vitelline membrane protein Vm26Ab from Drosophila melanogaster (Fruit fly).